Consider the following 103-residue polypeptide: Iron-sulfur cluster assembly protein CyaY (103 aa).

It belongs to the frataxin family.

Involved in iron-sulfur (Fe-S) cluster assembly. May act as a regulator of Fe-S biogenesis. The polypeptide is Iron-sulfur cluster assembly protein CyaY (Rickettsia peacockii (strain Rustic)).